Consider the following 562-residue polypeptide: ATP-dependent RNA helicase dbp2 (562 aa).

The Q motif signature appears at E132 to S160. Residues W163 to V338 form the Helicase ATP-binding domain. A176–T183 lines the ATP pocket. The short motif at D286 to D289 is the DEAD box element. The Helicase C-terminal domain maps to H370–A515. The segment at G526–S548 is RNA-binding RGG-box. Over residues W536–G550 the composition is skewed to gly residues. The segment at W536 to W562 is disordered.

Belongs to the DEAD box helicase family. DDX5/DBP2 subfamily. Associates with polysomes.

The protein localises to the cytoplasm. Its subcellular location is the nucleus. The catalysed reaction is ATP + H2O = ADP + phosphate + H(+). Its function is as follows. ATP-dependent RNA helicase involved nonsense-mediated mRNA decay and ribosome biogenesis through rRNA processing. This Neurospora crassa (strain ATCC 24698 / 74-OR23-1A / CBS 708.71 / DSM 1257 / FGSC 987) protein is ATP-dependent RNA helicase dbp2 (drh-1).